Reading from the N-terminus, the 322-residue chain is Protein-methionine-sulfoxide reductase catalytic subunit MsrP (322 aa).

A signal peptide (tat-type signal) is located at residues 1 to 59 (MSLRDALKTPSSEITDEAVYRDRRRLLQLFALTPALSVAGCAEADPPPPPKTVVTPAQA). Mo-molybdopterin contacts are provided by residues asparagine 79, 82–83 (YE), cysteine 137, threonine 172, asparagine 220, arginine 225, and 236–238 (SIK).

The protein belongs to the MsrP family. As to quaternary structure, heterodimer of a catalytic subunit (MsrP) and a heme-binding subunit (MsrQ). Mo-molybdopterin is required as a cofactor. In terms of processing, predicted to be exported by the Tat system. The position of the signal peptide cleavage has not been experimentally proven.

The protein localises to the periplasm. It catalyses the reaction L-methionyl-[protein] + a quinone + H2O = L-methionyl-(S)-S-oxide-[protein] + a quinol. The catalysed reaction is L-methionyl-[protein] + a quinone + H2O = L-methionyl-(R)-S-oxide-[protein] + a quinol. Part of the MsrPQ system that repairs oxidized periplasmic proteins containing methionine sulfoxide residues (Met-O), using respiratory chain electrons. Thus protects these proteins from oxidative-stress damage caused by reactive species of oxygen and chlorine generated by the host defense mechanisms. MsrPQ is essential for the maintenance of envelope integrity under bleach stress, rescuing a wide series of structurally unrelated periplasmic proteins from methionine oxidation. The catalytic subunit MsrP is non-stereospecific, being able to reduce both (R-) and (S-) diastereoisomers of methionine sulfoxide. This Xanthomonas campestris pv. campestris (strain ATCC 33913 / DSM 3586 / NCPPB 528 / LMG 568 / P 25) protein is Protein-methionine-sulfoxide reductase catalytic subunit MsrP.